The following is a 348-amino-acid chain: Large ribosomal subunit protein uL3m (348 aa).

The N-terminal 40 residues, 1–40 (MPGWRLLAWAGARVLDRGTGGLGTALGSGNRTDICVLVRS), are a transit peptide targeting the mitochondrion.

This sequence belongs to the universal ribosomal protein uL3 family. As to quaternary structure, component of the mitochondrial ribosome large subunit (39S) which comprises a 16S rRNA and about 50 distinct proteins.

It is found in the mitochondrion. This is Large ribosomal subunit protein uL3m (MRPL3) from Bos taurus (Bovine).